The chain runs to 395 residues: Phosphopentomutase (395 aa).

Residues Asp-12, Asp-289, His-294, Asp-330, His-331, and His-342 each coordinate Mn(2+).

Belongs to the phosphopentomutase family. Requires Mn(2+) as cofactor.

It localises to the cytoplasm. The catalysed reaction is 2-deoxy-alpha-D-ribose 1-phosphate = 2-deoxy-D-ribose 5-phosphate. It catalyses the reaction alpha-D-ribose 1-phosphate = D-ribose 5-phosphate. Its pathway is carbohydrate degradation; 2-deoxy-D-ribose 1-phosphate degradation; D-glyceraldehyde 3-phosphate and acetaldehyde from 2-deoxy-alpha-D-ribose 1-phosphate: step 1/2. Isomerase that catalyzes the conversion of deoxy-ribose 1-phosphate (dRib-1-P) and ribose 1-phosphate (Rib-1-P) to deoxy-ribose 5-phosphate (dRib-5-P) and ribose 5-phosphate (Rib-5-P), respectively. In Levilactobacillus brevis (strain ATCC 367 / BCRC 12310 / CIP 105137 / JCM 1170 / LMG 11437 / NCIMB 947 / NCTC 947) (Lactobacillus brevis), this protein is Phosphopentomutase.